A 911-amino-acid chain; its full sequence is Alpha-actinin-4 (911 aa).

The segment at 1-269 (MVDYHAANQS…YVSSFYHAFS (269 aa)) is actin-binding. Residues 8–31 (NQSYQYGPSSGSNGAGGGGTMGDY) form a disordered region. An interaction with VCL region spans residues 12 to 26 (QYGPSSGSNGAGGGG). Phosphotyrosine is present on tyrosine 31. The tract at residues 40 to 61 (RDLLLDPAWEKQQRKTFTAWCN) is interaction with VCL. 2 consecutive Calponin-homology (CH) domains span residues 50–154 (KQQR…LRFA) and 163–269 (TSAK…HAFS). Residues 84–88 (LMLLL) carry the LXXLL motif motif. The segment at 108 to 126 (KINNVNKALDFIASKGVKL) is interaction with VCL. Lysine 114 is modified (N6-acetyllysine). The polyphosphoinositide (PIP2)-binding stretch occupies residues 177–192 (TAPYKNVNVQNFHISW). Lysine 214 is subject to N6-acetyllysine. At threonine 249 the chain carries Phosphothreonine. Spectrin repeat units follow at residues 293–403 (HLME…WLLN), 413–518 (HLAE…ALEK), 528–639 (QLHL…ALLE), and 649–752 (HLRR…EVEN). Lysine 592 and lysine 625 each carry N6-acetyllysine. Position 696 is a phosphoserine (serine 696). The tract at residues 736-911 (WEQLLTTIAR…STALYGESDL (176 aa)) is mediates interaction with MICALL2. EF-hand domains follow at residues 765–800 (EQMQEFRASFNHFDKDHGGALGPEEFKACLISLGYD) and 806–841 (QGDAEFNRIMSVVDPNHSGLVTFQAFIDFMSRETTD). Aspartate 778 provides a ligand contact to Ca(2+). Lysine 779 bears the N6-acetyllysine mark. Positions 780 and 789 each coordinate Ca(2+). At lysine 859 the chain carries N6-acetyllysine. Position 909 is a phosphoserine (serine 909).

It belongs to the alpha-actinin family. As to quaternary structure, homodimer; antiparallel. Identified in a IGF2BP1-dependent mRNP granule complex containing untranslated mRNAs. Component of the CART complex, at least composed of ACTN4, HGS/HRS, MYO5B and TRIM3. Binds TRIM3 at the N-terminus. Interacts with MAGI1. Interacts with PDLIM2. Identified in a complex with CASK, IQGAP1, MAGI2, NPHS1, SPTAN1 and SPTBN1. Interacts with MICALL2 (preferentially in opened conformation); stimulated by RAB13 activation. Interacts with PPARG and RARA. Binds to VCL; this interaction triggers VCL conformational changes. Interacts with SEPTIN14. Interacts with IGSF8.

Its subcellular location is the nucleus. It localises to the cytoplasm. The protein resides in the cell junction. The protein localises to the cytoskeleton. It is found in the stress fiber. Its subcellular location is the perinuclear region. Functionally, F-actin cross-linking protein which is thought to anchor actin to a variety of intracellular structures. This is a bundling protein. Probably involved in vesicular trafficking via its association with the CART complex. The CART complex is necessary for efficient transferrin receptor recycling but not for EGFR degradation. Involved in tight junction assembly in epithelial cells probably through interaction with MICALL2. Links MICALL2 to the actin cytoskeleton and recruits it to the tight junctions. May also function as a transcriptional coactivator, stimulating transcription mediated by the nuclear hormone receptors PPARG and RARA. Association with IGSF8 regulates the immune synapse formation and is required for efficient T-cell activation. This is Alpha-actinin-4 from Bos taurus (Bovine).